A 420-amino-acid chain; its full sequence is ATP phosphoribosyltransferase regulatory subunit (420 aa).

Belongs to the class-II aminoacyl-tRNA synthetase family. HisZ subfamily. In terms of assembly, heteromultimer composed of HisG and HisZ subunits.

It localises to the cytoplasm. Its pathway is amino-acid biosynthesis; L-histidine biosynthesis; L-histidine from 5-phospho-alpha-D-ribose 1-diphosphate: step 1/9. Required for the first step of histidine biosynthesis. May allow the feedback regulation of ATP phosphoribosyltransferase activity by histidine. The sequence is that of ATP phosphoribosyltransferase regulatory subunit from Synechococcus sp. (strain ATCC 27144 / PCC 6301 / SAUG 1402/1) (Anacystis nidulans).